Consider the following 316-residue polypeptide: ATP synthase gamma chain (316 aa).

The protein belongs to the ATPase gamma chain family. As to quaternary structure, F-type ATPases have 2 components, CF(1) - the catalytic core - and CF(0) - the membrane proton channel. CF(1) has five subunits: alpha(3), beta(3), gamma(1), delta(1), epsilon(1). CF(0) has three main subunits: a, b and c.

Its subcellular location is the cellular thylakoid membrane. In terms of biological role, produces ATP from ADP in the presence of a proton gradient across the membrane. The gamma chain is believed to be important in regulating ATPase activity and the flow of protons through the CF(0) complex. This is ATP synthase gamma chain from Synechococcus sp. (strain CC9605).